A 130-amino-acid chain; its full sequence is MSMQDPIADMLTRIRNGQAASKVAVSMPSSKLKVAIAKVLKEEGYIAGYSVAGDVKPELEIELKYFQGKPVVELIQRVSRPGLRIYKRTTDLPKVMGGLGVAIVSTSKGVMTDRAARKASMGGEIICYVA.

The protein belongs to the universal ribosomal protein uS8 family. As to quaternary structure, part of the 30S ribosomal subunit. Contacts proteins S5 and S12.

Functionally, one of the primary rRNA binding proteins, it binds directly to 16S rRNA central domain where it helps coordinate assembly of the platform of the 30S subunit. This chain is Small ribosomal subunit protein uS8, found in Aeromonas salmonicida (strain A449).